Here is a 525-residue protein sequence, read N- to C-terminus: FNIP repeat-containing protein DDB_G0274617 (525 aa).

One copy of the FNIP repeat lies at 65–107 (YQHEIKKEMLPSSIISIIFYNIKNILSSDSIPDTVKFLGFNGY).

This is FNIP repeat-containing protein DDB_G0274617 from Dictyostelium discoideum (Social amoeba).